A 156-amino-acid chain; its full sequence is dCTP deaminase (156 aa).

DCTP-binding positions include 79–84 (RSTFAR), Asp95, Gln124, and Tyr138.

This sequence belongs to the dCTP deaminase family. As to quaternary structure, homotrimer.

The catalysed reaction is dCTP + H2O + H(+) = dUTP + NH4(+). It participates in pyrimidine metabolism; dUMP biosynthesis; dUMP from dCTP (dUTP route): step 1/2. Its function is as follows. Catalyzes the deamination of dCTP to dUTP. In Thermococcus sibiricus (strain DSM 12597 / MM 739), this protein is dCTP deaminase.